The sequence spans 60 residues: MDPCQCSKSGTCNCGGSCTCTNCSCKSCKKSCCPCCPSGCTKCASGCVCKGKTCDTSCCQ.

The beta stretch occupies residues 1-28 (MDPCQCSKSGTCNCGGSCTCTNCSCKSC). A divalent metal cation contacts are provided by Cys-4, Cys-6, Cys-12, Cys-14, Cys-18, Cys-20, Cys-23, Cys-25, Cys-28, Cys-32, Cys-33, Cys-35, Cys-36, Cys-40, Cys-43, Cys-47, Cys-49, Cys-54, Cys-58, and Cys-59. The alpha stretch occupies residues 29–60 (KKSCCPCCPSGCTKCASGCVCKGKTCDTSCCQ).

This sequence belongs to the metallothionein superfamily. Type 1 family.

Its function is as follows. Metallothioneins have a high content of cysteine residues that bind various heavy metals. The polypeptide is Metallothionein A (mta) (Trematomus bernacchii (Emerald rockcod)).